The sequence spans 424 residues: Histidine--tRNA ligase (424 aa).

The protein belongs to the class-II aminoacyl-tRNA synthetase family. As to quaternary structure, homodimer.

The protein localises to the cytoplasm. It catalyses the reaction tRNA(His) + L-histidine + ATP = L-histidyl-tRNA(His) + AMP + diphosphate + H(+). The protein is Histidine--tRNA ligase of Klebsiella pneumoniae (strain 342).